The following is a 559-amino-acid chain: MASRRILSSLLRSSSSRSTSKSSLIGSRNPRLLSPGPAHGAAPCGTLLGRVAEYSTSSPANSAAPSSAPAKDEGKKTYDYGGKGAIGRVCQVIGAIVDVRFEDQEGLPPIMTSLEVQDHPTRLVLEVSHHLGQNVVRTIAMDGTEGLVRGRKVLNTGAPITVPVGRATLGRIMNVLGEPIDERGEIKTEHYLPIHRDAPALVDLATGQEILATGIKVVDLLAPYQRGGKIGLFGGAGVGKTVLIMELINNVAKAHGGFSVFAGVGERTREGNDLYREMIESGVIKLGEKQSESKCALVYGQMNEPPGARARVGLTGLTVAEYFRDAEGQDVLLFIDNIFRFTQANSEVSALLGRIPSAVGYQPTLASDLGALQERITTTKKGSITSVQAIYVPADDLTDPAPATTFAHLDATTVLSRQISELGIYPAVDPLDSTSRMLSPHILGEEHYNTARGVQKVLQNYKNLQDIIAILGMDELSEDDKLTVARARKIQRFLSQPFHVAEIFTGAPGKYVDLKENINSFQGLLDGKYDDLSEQSFYMVGGIDEVVAKAEKIAKESAA.

Over residues 1 to 28 the composition is skewed to low complexity; that stretch reads MASRRILSSLLRSSSSRSTSKSSLIGSR. Positions 1–39 are disordered; sequence MASRRILSSLLRSSSSRSTSKSSLIGSRNPRLLSPGPAH. The transit peptide at 1-54 directs the protein to the mitochondrion; the sequence is MASRRILSSLLRSSSSRSTSKSSLIGSRNPRLLSPGPAHGAAPCGTLLGRVAEY. Ser62 is modified (phosphoserine). 234–241 lines the ATP pocket; the sequence is GGAGVGKT.

The protein belongs to the ATPase alpha/beta chains family. In terms of assembly, F-type ATPases have 2 components, CF(1) - the catalytic core - and CF(0) - the membrane proton channel. CF(1) has five subunits: alpha(3), beta(3), gamma(1), delta(1), epsilon(1). CF(0) has three main subunits: a, b and c.

The protein localises to the mitochondrion. Its subcellular location is the mitochondrion inner membrane. The enzyme catalyses ATP + H2O + 4 H(+)(in) = ADP + phosphate + 5 H(+)(out). In terms of biological role, mitochondrial membrane ATP synthase (F(1)F(0) ATP synthase or Complex V) produces ATP from ADP in the presence of a proton gradient across the membrane which is generated by electron transport complexes of the respiratory chain. F-type ATPases consist of two structural domains, F(1) - containing the extramembraneous catalytic core, and F(0) - containing the membrane proton channel, linked together by a central stalk and a peripheral stalk. During catalysis, ATP synthesis in the catalytic domain of F(1) is coupled via a rotary mechanism of the central stalk subunits to proton translocation. Subunits alpha and beta form the catalytic core in F(1). Rotation of the central stalk against the surrounding alpha(3)beta(3) subunits leads to hydrolysis of ATP in three separate catalytic sites on the beta subunits. This Arabidopsis thaliana (Mouse-ear cress) protein is ATP synthase subunit beta-3, mitochondrial.